A 293-amino-acid polypeptide reads, in one-letter code: Protein Pat (293 aa).

The BEN domain maps to 187 to 287 (LPDIILNPLD…LLLRTRQDRA (101 aa)).

In terms of assembly, interacts with poc1b. As to expression, an mRNA and protein component of germ plasm and primordial germ cells (PGCs) throughout oogenesis and early development, being first localized to the granulo-fibrillar material (GFM) of the mitochondrial cloud in stage I and II oocytes and to the periphery of mature germinal granules both in oocytes and in embryos. Shows some somatic expression including the ectodermal cells of tailbud embryos. In adults, only expressed in ovaries.

The protein resides in the cytoplasm. The protein localises to the nucleus. Functionally, probably plays a role in germ plasm formation, positioning and maintenance. The sequence is that of Protein Pat from Xenopus laevis (African clawed frog).